The chain runs to 433 residues: Glutamate-1-semialdehyde 2,1-aminomutase (433 aa).

Lys267 carries the post-translational modification N6-(pyridoxal phosphate)lysine.

Belongs to the class-III pyridoxal-phosphate-dependent aminotransferase family. HemL subfamily. Homodimer. It depends on pyridoxal 5'-phosphate as a cofactor.

It is found in the cytoplasm. It catalyses the reaction (S)-4-amino-5-oxopentanoate = 5-aminolevulinate. The protein operates within porphyrin-containing compound metabolism; protoporphyrin-IX biosynthesis; 5-aminolevulinate from L-glutamyl-tRNA(Glu): step 2/2. The sequence is that of Glutamate-1-semialdehyde 2,1-aminomutase from Syntrophobacter fumaroxidans (strain DSM 10017 / MPOB).